A 557-amino-acid chain; its full sequence is Calcium-dependent protein kinase 4 (557 aa).

Positions 1–72 (MGNTCRGSIG…LVSPRKASMN (72 aa)) are disordered. Glycine 2 carries the N-myristoyl glycine lipid modification. Positions 15–27 (QGYTQPEDSSCST) are enriched in polar residues. Positions 28-48 (NHNPSSGNSYSSSDNFSPTSN) are enriched in low complexity. The Protein kinase domain maps to 94-352 (YTLGRKLGQG…AHEVLCHPWI (259 aa)). ATP-binding positions include 100–108 (LGQGQFGTT) and lysine 123. Aspartate 218 (proton acceptor) is an active-site residue. The tract at residues 358-388 (APDRALDPAVLSRLKQFSAMNKLKKMALRVI) is autoinhibitory domain. EF-hand domains follow at residues 395 to 430 (EEIA…YGST), 431 to 466 (LKDT…LNKL), 467 to 502 (EREE…HNMT), and 506 to 536 (FEDI…GNPC). Aspartate 408, aspartate 410, serine 412, glutamate 419, aspartate 444, aspartate 446, serine 448, threonine 450, glutamate 455, aspartate 480, aspartate 482, serine 484, tyrosine 486, glutamate 491, aspartate 514, aspartate 516, aspartate 518, arginine 520, and glutamate 525 together coordinate Ca(2+).

Belongs to the protein kinase superfamily. Ser/Thr protein kinase family. CDPK subfamily.

The protein resides in the membrane. The catalysed reaction is L-seryl-[protein] + ATP = O-phospho-L-seryl-[protein] + ADP + H(+). The enzyme catalyses L-threonyl-[protein] + ATP = O-phospho-L-threonyl-[protein] + ADP + H(+). Its activity is regulated as follows. Activated by calcium. Autophosphorylation may play an important role in the regulation of the kinase activity. In terms of biological role, regulates the production of reactive oxygen species (ROS) by NADPH oxidase. The sequence is that of Calcium-dependent protein kinase 4 (CPK4) from Solanum tuberosum (Potato).